The following is a 229-amino-acid chain: Cytidylate kinase (229 aa).

10-18 (GPAGSGKST) contributes to the ATP binding site.

The protein belongs to the cytidylate kinase family. Type 1 subfamily.

Its subcellular location is the cytoplasm. The catalysed reaction is CMP + ATP = CDP + ADP. It catalyses the reaction dCMP + ATP = dCDP + ADP. The chain is Cytidylate kinase from Leptospira interrogans serogroup Icterohaemorrhagiae serovar Lai (strain 56601).